Here is a 467-residue protein sequence, read N- to C-terminus: UDP-N-acetylmuramate--L-alanine ligase (467 aa).

114–120 (GTHGKTT) is a binding site for ATP.

Belongs to the MurCDEF family.

The protein resides in the cytoplasm. It catalyses the reaction UDP-N-acetyl-alpha-D-muramate + L-alanine + ATP = UDP-N-acetyl-alpha-D-muramoyl-L-alanine + ADP + phosphate + H(+). It participates in cell wall biogenesis; peptidoglycan biosynthesis. Cell wall formation. The sequence is that of UDP-N-acetylmuramate--L-alanine ligase from Rhodopseudomonas palustris (strain BisA53).